Consider the following 158-residue polypeptide: Small ribosomal subunit protein bS6 (158 aa).

Residues 98–158 (EAPSAPLARR…DRDEDQNEEN (61 aa)) are disordered. Basic and acidic residues-rich tracts occupy residues 106–117 (RRGEDRDRDRGF) and 127–150 (DSGR…RSDR).

Belongs to the bacterial ribosomal protein bS6 family.

Its function is as follows. Binds together with bS18 to 16S ribosomal RNA. The sequence is that of Small ribosomal subunit protein bS6 from Acidiphilium cryptum (strain JF-5).